The primary structure comprises 351 residues: Nicotinate-nucleotide--dimethylbenzimidazole phosphoribosyltransferase (351 aa).

Glu-317 functions as the Proton acceptor in the catalytic mechanism.

It belongs to the CobT family.

The catalysed reaction is 5,6-dimethylbenzimidazole + nicotinate beta-D-ribonucleotide = alpha-ribazole 5'-phosphate + nicotinate + H(+). Its pathway is nucleoside biosynthesis; alpha-ribazole biosynthesis; alpha-ribazole from 5,6-dimethylbenzimidazole: step 1/2. Its function is as follows. Catalyzes the synthesis of alpha-ribazole-5'-phosphate from nicotinate mononucleotide (NAMN) and 5,6-dimethylbenzimidazole (DMB). In Pseudomonas putida (strain GB-1), this protein is Nicotinate-nucleotide--dimethylbenzimidazole phosphoribosyltransferase.